We begin with the raw amino-acid sequence, 157 residues long: MSAKPATDDAKDELLSPFRRLYALTRTPYPALANAALLASTPVLSPSFKVPPTQSPALSIPMSRVFSKSSTARIGITTKTALFFSTMQAIGAYMIYDNDLENGAGFIATWSALYLIVGGKKSFSALRYGRTWPLVLSSVSLANAVLYGQRFLATGFQ.

S2 is subject to N-acetylserine. 4 helical membrane-spanning segments follow: residues 31-48 (ALANAALLASTPVLSPSF), 80-96 (TALFFSTMQAIGAYMIY), 103-119 (GAGFIATWSALYLIVGG), and 131-147 (TWPLVLSSVSLANAVLY).

This sequence belongs to the AIM19 family.

It is found in the mitochondrion membrane. This chain is Altered inheritance of mitochondria protein 19, mitochondrial (AIM19), found in Saccharomyces cerevisiae (strain ATCC 204508 / S288c) (Baker's yeast).